A 440-amino-acid polypeptide reads, in one-letter code: Metacaspase-1 (440 aa).

Positions 1-134 (MFPGSGRKTY…NPQGFGQNSG (134 aa)) are disordered. Over residues 14–51 (APPPGPPNGYQYGPPPGAQGQYPPPQGYPPQGYPPQGY) the composition is skewed to pro residues. Low complexity predominate over residues 52–81 (PPQGYAPQGYPPQGYAPQGYAPQGYQQQGG). Residues 82-94 (QQQGGQQQGGQQQ) are compositionally biased toward gly residues. Over residues 98-110 (RQTYATQEAQNFG) the composition is skewed to polar residues. Residues His230 and Cys286 contribute to the active site.

It belongs to the peptidase C14B family.

Functionally, involved in cell death (apoptosis). The sequence is that of Metacaspase-1 (MCA1) from Debaryomyces hansenii (strain ATCC 36239 / CBS 767 / BCRC 21394 / JCM 1990 / NBRC 0083 / IGC 2968) (Yeast).